The primary structure comprises 418 residues: Coenzyme A biosynthesis bifunctional protein CoaBC (418 aa).

Residues 1 to 195 are phosphopantothenoylcysteine decarboxylase; that stretch reads MVDHKRIPKQ…ALPYDLAGRK (195 aa). Residues 196–418 form a phosphopantothenate--cysteine ligase region; it reads LLVTAGGTRE…IVTFLAGCSS (223 aa). CTP contacts are provided by Asp-285, Lys-295, Phe-336, Lys-354, and Lys-358.

It in the N-terminal section; belongs to the HFCD (homo-oligomeric flavin containing Cys decarboxylase) superfamily. In the C-terminal section; belongs to the PPC synthetase family. Mg(2+) serves as cofactor. The cofactor is FMN.

The enzyme catalyses N-[(R)-4-phosphopantothenoyl]-L-cysteine + H(+) = (R)-4'-phosphopantetheine + CO2. It catalyses the reaction (R)-4'-phosphopantothenate + L-cysteine + CTP = N-[(R)-4-phosphopantothenoyl]-L-cysteine + CMP + diphosphate + H(+). Its pathway is cofactor biosynthesis; coenzyme A biosynthesis; CoA from (R)-pantothenate: step 2/5. It participates in cofactor biosynthesis; coenzyme A biosynthesis; CoA from (R)-pantothenate: step 3/5. Its function is as follows. Catalyzes two sequential steps in the biosynthesis of coenzyme A. In the first step cysteine is conjugated to 4'-phosphopantothenate to form 4-phosphopantothenoylcysteine. In the second step the latter compound is decarboxylated to form 4'-phosphopantotheine. The chain is Coenzyme A biosynthesis bifunctional protein CoaBC from Mycobacterium bovis (strain ATCC BAA-935 / AF2122/97).